We begin with the raw amino-acid sequence, 362 residues long: PDZ and LIM domain protein 3 (362 aa).

A PDZ domain is found at M1–E84. Phosphoserine occurs at positions 18, 92, and 263. Residues D261–G282 are disordered. An LIM zinc-binding domain is found at P290–P349.

In terms of assembly, interacts with ACTN2. Forms a heterodimer with PDLIM4 (via LIM domain). Highly expressed in skeletal muscle and at low levels in the heart.

The protein resides in the cytoplasm. Its subcellular location is the myofibril. The protein localises to the sarcomere. It localises to the z line. In terms of biological role, may play a role in the organization of actin filament arrays within muscle cells. This is PDZ and LIM domain protein 3 (Pdlim3) from Rattus norvegicus (Rat).